Here is a 157-residue protein sequence, read N- to C-terminus: Arginine repressor (157 aa).

This sequence belongs to the ArgR family.

The protein localises to the cytoplasm. It participates in amino-acid biosynthesis; L-arginine biosynthesis [regulation]. In terms of biological role, regulates arginine biosynthesis genes. This Lactobacillus delbrueckii subsp. bulgaricus (strain ATCC 11842 / DSM 20081 / BCRC 10696 / JCM 1002 / NBRC 13953 / NCIMB 11778 / NCTC 12712 / WDCM 00102 / Lb 14) protein is Arginine repressor.